The following is a 257-amino-acid chain: 3-deoxy-manno-octulosonate cytidylyltransferase (257 aa).

This sequence belongs to the KdsB family.

It is found in the cytoplasm. It catalyses the reaction 3-deoxy-alpha-D-manno-oct-2-ulosonate + CTP = CMP-3-deoxy-beta-D-manno-octulosonate + diphosphate. The protein operates within nucleotide-sugar biosynthesis; CMP-3-deoxy-D-manno-octulosonate biosynthesis; CMP-3-deoxy-D-manno-octulosonate from 3-deoxy-D-manno-octulosonate and CTP: step 1/1. It functions in the pathway bacterial outer membrane biogenesis; lipopolysaccharide biosynthesis. Functionally, activates KDO (a required 8-carbon sugar) for incorporation into bacterial lipopolysaccharide in Gram-negative bacteria. This Albidiferax ferrireducens (strain ATCC BAA-621 / DSM 15236 / T118) (Rhodoferax ferrireducens) protein is 3-deoxy-manno-octulosonate cytidylyltransferase.